A 66-amino-acid chain; its full sequence is Large ribosomal subunit protein bL33c (66 aa).

It belongs to the bacterial ribosomal protein bL33 family.

The protein localises to the plastid. The protein resides in the chloroplast. The polypeptide is Large ribosomal subunit protein bL33c (Aethionema cordifolium (Lebanon stonecress)).